The following is a 126-amino-acid chain: Spermidine export protein MdtJ (126 aa).

Helical transmembrane passes span 1-21, 30-50, 54-74, and 81-101; these read MIYW…TLSM, ITGH…LSLA, VALG…ITLF, and EPFS…IVML.

The protein belongs to the drug/metabolite transporter (DMT) superfamily. Small multidrug resistance (SMR) (TC 2.A.7.1) family. MdtJ subfamily. Forms a complex with MdtI.

The protein resides in the cell inner membrane. In terms of biological role, catalyzes the excretion of spermidine. In Sodalis glossinidius (strain morsitans), this protein is Spermidine export protein MdtJ.